The sequence spans 246 residues: Phosphomannomutase 2 (246 aa).

Ala-2 carries the post-translational modification N-acetylalanine. Asp-12 (nucleophile) is an active-site residue. 2 residues coordinate Mg(2+): Asp-12 and Asp-14. Asp-14 acts as the Proton donor/acceptor in catalysis. Alpha-D-mannose 1-phosphate-binding residues include Arg-21, Arg-123, Arg-134, and Arg-141. The residue at position 149 (Lys-149) is an N6-acetyllysine. Residues Ser-179 and Asp-181 each contribute to the alpha-D-mannose 1-phosphate site. Mg(2+)-binding residues include Asp-209, Phe-221, Asp-223, and Thr-226.

This sequence belongs to the eukaryotic PMM family. Homodimer.

It is found in the cytoplasm. The enzyme catalyses alpha-D-mannose 1-phosphate = D-mannose 6-phosphate. The protein operates within nucleotide-sugar biosynthesis; GDP-alpha-D-mannose biosynthesis; alpha-D-mannose 1-phosphate from D-fructose 6-phosphate: step 2/2. Involved in the synthesis of the GDP-mannose and dolichol-phosphate-mannose required for a number of critical mannosyl transfer reactions. The sequence is that of Phosphomannomutase 2 (PMM2) from Homo sapiens (Human).